The chain runs to 262 residues: Type III pantothenate kinase (262 aa).

ATP is bound at residue 6–13 (DVGNTNTV). Substrate-binding positions include Tyr101 and 108 to 111 (GADR). Asp110 serves as the catalytic Proton acceptor. Asp130 lines the K(+) pocket. Thr133 is a binding site for ATP. Substrate is bound at residue Thr186.

Belongs to the type III pantothenate kinase family. As to quaternary structure, homodimer. NH4(+) serves as cofactor. Requires K(+) as cofactor.

The protein localises to the cytoplasm. It carries out the reaction (R)-pantothenate + ATP = (R)-4'-phosphopantothenate + ADP + H(+). The protein operates within cofactor biosynthesis; coenzyme A biosynthesis; CoA from (R)-pantothenate: step 1/5. Catalyzes the phosphorylation of pantothenate (Pan), the first step in CoA biosynthesis. In Desulforapulum autotrophicum (strain ATCC 43914 / DSM 3382 / VKM B-1955 / HRM2) (Desulfobacterium autotrophicum), this protein is Type III pantothenate kinase.